The chain runs to 640 residues: 5-aminolevulinate synthase, non-specific, mitochondrial (640 aa).

The N-terminal 56 residues, 1-56 (METVVRSCPFLSRVPQAFLQKAGKSLLFYAQNCPKMMEVGAKPAPRALSTAAVHYQ), are a transit peptide targeting the mitochondrion. 2 disordered regions span residues 60–103 (ETPP…TSQG) and 143–163 (EVAE…GGDP). Over residues 75-92 (VQQTPDGSQQSPDGTQLP) the composition is skewed to polar residues. Arg-217, Ser-334, and Lys-353 together coordinate substrate. Pyridoxal 5'-phosphate contacts are provided by Ser-386, His-414, and Thr-442. Lys-445 is an active-site residue. Lys-445 carries the N6-(pyridoxal phosphate)lysine modification. Pyridoxal 5'-phosphate-binding residues include Thr-474 and Thr-475. A substrate-binding site is contributed by Thr-562. Pro-576 carries the hydroxyproline modification.

It belongs to the class-II pyridoxal-phosphate-dependent aminotransferase family. In terms of assembly, homodimer. Interacts (hydroxylated form) with VHL. Pyridoxal 5'-phosphate is required as a cofactor. In normoxia, is hydroxylated at Pro-576, promoting interaction with VHL, initiating ubiquitination and subsequent degradation via the proteasome. Post-translationally, ubiquitinated; in normoxia following hydroxylation and interaction with VHL, leading to its subsequent degradation via the proteasome.

It localises to the mitochondrion inner membrane. The catalysed reaction is succinyl-CoA + glycine + H(+) = 5-aminolevulinate + CO2 + CoA. Its pathway is porphyrin-containing compound metabolism; protoporphyrin-IX biosynthesis; 5-aminolevulinate from glycine: step 1/1. Functionally, catalyzes the pyridoxal 5'-phosphate (PLP)-dependent condensation of succinyl-CoA and glycine to form aminolevulinic acid (ALA), with CoA and CO2 as by-products. The sequence is that of 5-aminolevulinate synthase, non-specific, mitochondrial (ALAS1) from Pongo abelii (Sumatran orangutan).